The sequence spans 284 residues: MAWLRKKEQQSDPLTPWQQYQARQQQTPRHDRRQKPKLDVNLPKIQTLRRRKLVKNLVLILLPLLLLLGVFGYFASPLSKVGLVSVQGVTTVPDQQVINATKLSDDDLMLSVAFHKNAIAQRVQKSLPEIKTASLTIKGFNRIIIKTSEYQTVGYVYQKHAYHKILVTGEVLAAGTQTPVTTYPVFSGFTAKELPQMITLLKQFPAAIRRDISEIDASRGDANPNQIALNMNDGYRIIADTRTIAKKIKYYPAIVSQVKQKGVVDLEVGAFWRPYSSSEKSSND.

The segment covering 1 to 10 (MAWLRKKEQQ) has biased composition (basic and acidic residues). The disordered stretch occupies residues 1-38 (MAWLRKKEQQSDPLTPWQQYQARQQQTPRHDRRQKPKL). Over 1–56 (MAWLRKKEQQSDPLTPWQQYQARQQQTPRHDRRQKPKLDVNLPKIQTLRRRKLVKN) the chain is Cytoplasmic. The chain crosses the membrane as a helical span at residues 57 to 77 (LVLILLPLLLLLGVFGYFASP). Residues 78-284 (LSKVGLVSVQ…YSSSEKSSND (207 aa)) lie on the Extracellular side of the membrane. One can recognise a POTRA domain in the interval 79 to 150 (SKVGLVSVQG…NRIIIKTSEY (72 aa)).

It belongs to the FtsQ/DivIB family. DivIB subfamily.

It localises to the cell membrane. Its function is as follows. Cell division protein that may be involved in stabilizing or promoting the assembly of the division complex. This is Cell division protein DivIB from Lacticaseibacillus rhamnosus (strain ATCC 53103 / LMG 18243 / GG) (Lactobacillus rhamnosus).